A 262-amino-acid chain; its full sequence is R3H domain-containing protein 4 (262 aa).

Disordered regions lie at residues 1 to 27 (MVALDNSEGGPEATPSGETRLSLPGCL) and 132 to 155 (YLEDESQGKRRRGPGRGEDRRRED). Over residues 146-155 (GRGEDRRRED) the composition is skewed to basic and acidic residues. The region spanning 182–245 (METLESWEER…RRQMKVSNRH (64 aa)) is the R3H domain.

The protein resides in the nucleus. The chain is R3H domain-containing protein 4 (R3hdm4) from Mus musculus (Mouse).